Consider the following 76-residue polypeptide: Exodeoxyribonuclease 7 small subunit (76 aa).

The protein belongs to the XseB family. In terms of assembly, heterooligomer composed of large and small subunits.

It localises to the cytoplasm. The catalysed reaction is Exonucleolytic cleavage in either 5'- to 3'- or 3'- to 5'-direction to yield nucleoside 5'-phosphates.. In terms of biological role, bidirectionally degrades single-stranded DNA into large acid-insoluble oligonucleotides, which are then degraded further into small acid-soluble oligonucleotides. This chain is Exodeoxyribonuclease 7 small subunit, found in Legionella pneumophila subsp. pneumophila (strain Philadelphia 1 / ATCC 33152 / DSM 7513).